A 397-amino-acid chain; its full sequence is 8-amino-7-oxononanoate synthase (397 aa).

Arg-21 lines the substrate pocket. 110 to 111 is a binding site for pyridoxal 5'-phosphate; the sequence is GY. Substrate is bound at residue His-135. The pyridoxal 5'-phosphate site is built by Ser-181, His-209, and Thr-238. Residue Lys-241 is modified to N6-(pyridoxal phosphate)lysine. Position 355 (Thr-355) interacts with substrate.

This sequence belongs to the class-II pyridoxal-phosphate-dependent aminotransferase family. BioF subfamily. Homodimer. It depends on pyridoxal 5'-phosphate as a cofactor.

It carries out the reaction 6-carboxyhexanoyl-[ACP] + L-alanine + H(+) = (8S)-8-amino-7-oxononanoate + holo-[ACP] + CO2. The protein operates within cofactor biosynthesis; biotin biosynthesis. Catalyzes the decarboxylative condensation of pimeloyl-[acyl-carrier protein] and L-alanine to produce 8-amino-7-oxononanoate (AON), [acyl-carrier protein], and carbon dioxide. This is 8-amino-7-oxononanoate synthase from Saccharophagus degradans (strain 2-40 / ATCC 43961 / DSM 17024).